Consider the following 204-residue polypeptide: MNDVKLTVLGGEGTGKSALIVRFLTKRFIGEYASNFESIYNKHLCLEGKQLNLEIYDPCSQPQKAKFSLTSELHWADGFVIVYDISDRSSFAFAKALIYRIREPQTSHCKRPVESAVLLVGNKQDLCHVREVGWEEGHKLALDNRCQFCELSAAEQSLEVEMMFIRIIRDILTNFKLKEKRRYSGSKSMAKLINNVFGKRRKSV.

A small GTPase-like region spans residues 1-204; it reads MNDVKLTVLG…NVFGKRRKSV (204 aa). Residues 10–17, 57–63, and 122–125 contribute to the GTP site; these read GGEGTGKS, DPCSQPQ, and NKQD.

It belongs to the small GTPase superfamily. Ras family.

The catalysed reaction is GTP + H2O = GDP + phosphate + H(+). Functionally, binds GDP/GTP and may possess intrinsic GTPase activity. This is Ras-related and estrogen-regulated growth inhibitor-like protein (RERGL) from Bos taurus (Bovine).